Reading from the N-terminus, the 361-residue chain is Alanine racemase (361 aa).

K35 functions as the Proton acceptor; specific for D-alanine in the catalytic mechanism. The residue at position 35 (K35) is an N6-(pyridoxal phosphate)lysine. R132 is a binding site for substrate. Y257 functions as the Proton acceptor; specific for L-alanine in the catalytic mechanism. Residue M305 coordinates substrate.

The protein belongs to the alanine racemase family. Requires pyridoxal 5'-phosphate as cofactor.

It catalyses the reaction L-alanine = D-alanine. Its pathway is amino-acid biosynthesis; D-alanine biosynthesis; D-alanine from L-alanine: step 1/1. In terms of biological role, catalyzes the interconversion of L-alanine and D-alanine. May also act on other amino acids. This chain is Alanine racemase (alr), found in Thioalkalivibrio sulfidiphilus (strain HL-EbGR7).